The following is a 502-amino-acid chain: Glutamate--tRNA ligase (502 aa).

Residues Pro-21–Met-31 carry the 'HIGH' region motif. The 'KMSKS' region motif lies at Lys-265–Arg-269. Position 268 (Lys-268) interacts with ATP.

It belongs to the class-I aminoacyl-tRNA synthetase family. Glutamate--tRNA ligase type 1 subfamily. In terms of assembly, monomer.

It localises to the cytoplasm. The enzyme catalyses tRNA(Glu) + L-glutamate + ATP = L-glutamyl-tRNA(Glu) + AMP + diphosphate. Functionally, catalyzes the attachment of glutamate to tRNA(Glu) in a two-step reaction: glutamate is first activated by ATP to form Glu-AMP and then transferred to the acceptor end of tRNA(Glu). In Mycobacterium leprae (strain TN), this protein is Glutamate--tRNA ligase.